A 505-amino-acid chain; its full sequence is Kelch-like protein 42 (505 aa).

In terms of domain architecture, BTB spans 5–78 (EMVQIRLEDR…INAGGAREGW (74 aa)). Ser43 is subject to Phosphoserine. Kelch repeat units lie at residues 176–234 (PGDV…PLAN), 235–282 (NLPP…NEWL), 284–325 (VASM…DAWN), 327–372 (VAPL…DMWT), 374–429 (FETC…RQWL), and 431–480 (LKEN…DSWE).

In terms of assembly, component of the BCR(KLHL42) E3 ubiquitin ligase complex, at least composed of CUL3 and KLHL42. Interacts (via the BTB domain) with CUL3. Interacts (via the kelch domains) with KATNA1.

The protein localises to the cytoplasm. Its subcellular location is the cytoskeleton. It is found in the spindle. It participates in protein modification; protein ubiquitination. Substrate-specific adapter of a BCR (BTB-CUL3-RBX1) E3 ubiquitin-protein ligase complex required for mitotic progression and cytokinesis. The BCR(KLHL42) E3 ubiquitin ligase complex mediates the ubiquitination and subsequent degradation of KATNA1. Involved in microtubule dynamics throughout mitosis. The chain is Kelch-like protein 42 (KLHL42) from Homo sapiens (Human).